The following is a 253-amino-acid chain: MDIIIRADAQEVGKEAAAIMAPFIKQGRTIGLATGSSPLTTYRELIRMYESGELTFKTIQAFLLDEYVGLARDDKNSYFRTIRDEFTAHVDFVDANVHSPDSTDPDPYHAAALYEQKIIDTGVAIQLLGVGVNGHIGFNEPTSALQGPTKVQALHPQTIKDNARFFNDCIENVPTHAMTQGLGTITRAENIIMVATGEAKADAIHRIVEGPLTALCPGSVLQLHADVTIVVDEAAASKLEHADYYRTMERIRL.

The active-site Proton acceptor; for enolization step is aspartate 65. Asparagine 133 (for ring-opening step) is an active-site residue. Histidine 135 functions as the Proton acceptor; for ring-opening step in the catalytic mechanism. The For ring-opening step role is filled by glutamate 140.

It belongs to the glucosamine/galactosamine-6-phosphate isomerase family. NagB subfamily.

It catalyses the reaction alpha-D-glucosamine 6-phosphate + H2O = beta-D-fructose 6-phosphate + NH4(+). It functions in the pathway amino-sugar metabolism; N-acetylneuraminate degradation; D-fructose 6-phosphate from N-acetylneuraminate: step 5/5. Catalyzes the reversible isomerization-deamination of glucosamine 6-phosphate (GlcN6P) to form fructose 6-phosphate (Fru6P) and ammonium ion. The protein is Glucosamine-6-phosphate deaminase of Corynebacterium efficiens (strain DSM 44549 / YS-314 / AJ 12310 / JCM 11189 / NBRC 100395).